A 238-amino-acid polypeptide reads, in one-letter code: NAD-dependent protein deacylase (238 aa).

Positions 1-237 (MRGIMKVFVL…PAWVERLLAR (237 aa)) constitute a Deacetylase sirtuin-type domain. Residue 12-31 (GAGVSAESGLGTFRDKDGVW) coordinates NAD(+). Substrate is bound by residues Tyr-56 and Arg-59. 94-97 (QNVD) contacts NAD(+). The Proton acceptor role is filled by His-112. Zn(2+) is bound by residues Cys-120, Cys-123, Cys-139, and Cys-142. NAD(+) contacts are provided by residues 179 to 181 (GTS), 205 to 207 (NLE), and Ala-223.

Belongs to the sirtuin family. Class III subfamily. The cofactor is Zn(2+).

Its subcellular location is the cytoplasm. It carries out the reaction N(6)-acetyl-L-lysyl-[protein] + NAD(+) + H2O = 2''-O-acetyl-ADP-D-ribose + nicotinamide + L-lysyl-[protein]. It catalyses the reaction N(6)-succinyl-L-lysyl-[protein] + NAD(+) + H2O = 2''-O-succinyl-ADP-D-ribose + nicotinamide + L-lysyl-[protein]. In terms of biological role, NAD-dependent lysine deacetylase and desuccinylase that specifically removes acetyl and succinyl groups on target proteins. Modulates the activities of several proteins which are inactive in their acylated form. The sequence is that of NAD-dependent protein deacylase from Caulobacter vibrioides (strain ATCC 19089 / CIP 103742 / CB 15) (Caulobacter crescentus).